Reading from the N-terminus, the 409-residue chain is MNQKHSEPFYISPRLFDNRRLKRRRCRWMERLLEHQRICMARMRDQVALASKTDRQLSHLQRRHVASTLQPDVTIDLLSDDDETPSAGQPAAAGHNRLLIPAPGHRAHRTGRRQAPRRAATHSYPVTDSILITSDDEHNEQEPSSTARVRSQLSMRSPPPLAPLTQSETIEEVTVSLVPRTSTTANCLTRVSGHPKPCRASTAASNGFATAEGGEGGNETGCFLEVDVGGGITATLPDETTVHTVIANRIYELSLSKLREGLAFSGVPEYTNDLMPEQLQKLSPALRAKVAPLVAPSPPTPISLKLSSDLSISLISDEDDCESTGPHVNGGVGTEPVHPVVVAAAEAHAAAKLLKQQQPQLSVVQHLQYVGGGLAAPVALALPVMAANPTSSASVVALPLQLPRRRKLG.

Ser-86 carries the phosphoserine modification. Residues 106–120 (RAHRTGRRQAPRRAA) show a composition bias toward basic residues. The disordered stretch occupies residues 106-165 (RAHRTGRRQAPRRAATHSYPVTDSILITSDDEHNEQEPSSTARVRSQLSMRSPPPLAPLT). Residue Thr-133 is modified to Phosphothreonine. Ser-134 carries the post-translational modification Phosphoserine. Positions 142-155 (EPSSTARVRSQLSM) are enriched in polar residues.

This chain is Protein a6 (a6), found in Drosophila melanogaster (Fruit fly).